The sequence spans 810 residues: LPS-assembly protein LptD (810 aa).

Positions 1 to 29 are cleaved as a signal peptide; that stretch reads MTKRTLGYSYPIALTISLVPALTPAIVQA.

It belongs to the LptD family. As to quaternary structure, component of the lipopolysaccharide transport and assembly complex. Interacts with LptE and LptA.

The protein resides in the cell outer membrane. Together with LptE, is involved in the assembly of lipopolysaccharide (LPS) at the surface of the outer membrane. This chain is LPS-assembly protein LptD, found in Aeromonas hydrophila subsp. hydrophila (strain ATCC 7966 / DSM 30187 / BCRC 13018 / CCUG 14551 / JCM 1027 / KCTC 2358 / NCIMB 9240 / NCTC 8049).